Here is a 547-residue protein sequence, read N- to C-terminus: Glutamyl-tRNA(Gln) amidotransferase subunit B, mitochondrial (547 aa).

This sequence belongs to the GatB/GatE family. GatB subfamily. Subunit of the heterotrimeric GatFAB amidotransferase (AdT) complex, composed of A, B and F subunits.

The protein resides in the mitochondrion. It catalyses the reaction L-glutamyl-tRNA(Gln) + L-glutamine + ATP + H2O = L-glutaminyl-tRNA(Gln) + L-glutamate + ADP + phosphate + H(+). Its function is as follows. Allows the formation of correctly charged Gln-tRNA(Gln) through the transamidation of misacylated Glu-tRNA(Gln) in the mitochondria. The reaction takes place in the presence of glutamine and ATP through an activated gamma-phospho-Glu-tRNA(Gln). The chain is Glutamyl-tRNA(Gln) amidotransferase subunit B, mitochondrial from Lachancea thermotolerans (strain ATCC 56472 / CBS 6340 / NRRL Y-8284) (Yeast).